Here is a 250-residue protein sequence, read N- to C-terminus: Probable fimbrial chaperone YfcS (250 aa).

The N-terminal stretch at 1-28 (MSDLLCSAKLGAMTLALLLSATSLSALA) is a signal peptide.

The protein belongs to the periplasmic pilus chaperone family.

The protein localises to the periplasm. Part of the yfcOPQRSUV fimbrial operon. Could contribute to adhesion to various surfaces in specific environmental niches. Increases adhesion to eukaryotic T24 bladder epithelial cells in the absence of fim genes. The chain is Probable fimbrial chaperone YfcS (yfcS) from Escherichia coli (strain K12).